We begin with the raw amino-acid sequence, 556 residues long: CTP synthase (556 aa).

Positions 1 to 266 are amidoligase domain; sequence MKYIFVTGGV…GKVVEDLLGL (266 aa). Position 12 (S12) interacts with CTP. Position 12 (S12) interacts with UTP. 13–18 is an ATP binding site; it reads SLGKGV. Y53 is a binding site for L-glutamine. Position 70 (D70) interacts with ATP. Mg(2+)-binding residues include D70 and E140. CTP contacts are provided by residues 147–149, 187–192, and K223; these read DIE and KTKPTQ. Residues 187–192 and K223 each bind UTP; that span reads KTKPTQ. In terms of domain architecture, Glutamine amidotransferase type-1 spans 291–544; that stretch reads TIAIAGKYTE…VKAALRGQSS (254 aa). Residue G356 coordinates L-glutamine. C383 functions as the Nucleophile; for glutamine hydrolysis in the catalytic mechanism. Residues 384-387, E407, and R467 each bind L-glutamine; that span reads LGMQ. Catalysis depends on residues H517 and E519.

It belongs to the CTP synthase family. As to quaternary structure, homotetramer.

The catalysed reaction is UTP + L-glutamine + ATP + H2O = CTP + L-glutamate + ADP + phosphate + 2 H(+). The enzyme catalyses L-glutamine + H2O = L-glutamate + NH4(+). It carries out the reaction UTP + NH4(+) + ATP = CTP + ADP + phosphate + 2 H(+). The protein operates within pyrimidine metabolism; CTP biosynthesis via de novo pathway; CTP from UDP: step 2/2. Its activity is regulated as follows. Allosterically activated by GTP, when glutamine is the substrate; GTP has no effect on the reaction when ammonia is the substrate. The allosteric effector GTP functions by stabilizing the protein conformation that binds the tetrahedral intermediate(s) formed during glutamine hydrolysis. Inhibited by the product CTP, via allosteric rather than competitive inhibition. Catalyzes the ATP-dependent amination of UTP to CTP with either L-glutamine or ammonia as the source of nitrogen. Regulates intracellular CTP levels through interactions with the four ribonucleotide triphosphates. This chain is CTP synthase, found in Deinococcus deserti (strain DSM 17065 / CIP 109153 / LMG 22923 / VCD115).